Reading from the N-terminus, the 202-residue chain is Ribonuclease HII (202 aa).

An RNase H type-2 domain is found at 18–202; sequence GQYAGVDEVG…KSFRPVREAM (185 aa). The a divalent metal cation site is built by aspartate 24, glutamate 25, and aspartate 116.

Belongs to the RNase HII family. Mn(2+) serves as cofactor. Mg(2+) is required as a cofactor.

The protein localises to the cytoplasm. It catalyses the reaction Endonucleolytic cleavage to 5'-phosphomonoester.. Its function is as follows. Endonuclease that specifically degrades the RNA of RNA-DNA hybrids. This chain is Ribonuclease HII, found in Shewanella piezotolerans (strain WP3 / JCM 13877).